Consider the following 214-residue polypeptide: Variable small protein 1 (214 aa).

An N-terminal signal peptide occupies residues 1–18; that stretch reads MRKRISAIIMTLFMVFMS. C19 carries the N-palmitoyl cysteine lipid modification. C19 carries the S-diacylglycerol cysteine lipid modification.

Belongs to the variable small protein (Vsp) family.

The protein resides in the cell outer membrane. Functionally, the Vlp and Vsp proteins are antigenically distinct proteins, only one vlp or vsp gene is transcriptionally active at any one time. Switching between these genes is a mechanism of host immune response evasion. The polypeptide is Variable small protein 1 (Borrelia hermsii).